The primary structure comprises 225 residues: UPF0758 protein Sama_0327 (225 aa).

An MPN domain is found at 102 to 224 (VLTSPDLTRD…IVSFAERGWI (123 aa)). 3 residues coordinate Zn(2+): histidine 173, histidine 175, and aspartate 186. The JAMM motif signature appears at 173–186 (HNHPSGVAEPSQAD).

Belongs to the UPF0758 family.

The chain is UPF0758 protein Sama_0327 from Shewanella amazonensis (strain ATCC BAA-1098 / SB2B).